A 424-amino-acid polypeptide reads, in one-letter code: Serine--tRNA ligase (424 aa).

Residue Thr-230–Glu-232 participates in L-serine binding. Arg-261–Glu-263 serves as a coordination point for ATP. Residue Glu-284 participates in L-serine binding. Glu-348 to Ser-351 lines the ATP pocket. Residue Ser-384 participates in L-serine binding.

It belongs to the class-II aminoacyl-tRNA synthetase family. Type-1 seryl-tRNA synthetase subfamily. As to quaternary structure, homodimer. The tRNA molecule binds across the dimer.

The protein localises to the cytoplasm. The catalysed reaction is tRNA(Ser) + L-serine + ATP = L-seryl-tRNA(Ser) + AMP + diphosphate + H(+). It catalyses the reaction tRNA(Sec) + L-serine + ATP = L-seryl-tRNA(Sec) + AMP + diphosphate + H(+). It functions in the pathway aminoacyl-tRNA biosynthesis; selenocysteinyl-tRNA(Sec) biosynthesis; L-seryl-tRNA(Sec) from L-serine and tRNA(Sec): step 1/1. In terms of biological role, catalyzes the attachment of serine to tRNA(Ser). Is also able to aminoacylate tRNA(Sec) with serine, to form the misacylated tRNA L-seryl-tRNA(Sec), which will be further converted into selenocysteinyl-tRNA(Sec). In Streptococcus pneumoniae (strain Hungary19A-6), this protein is Serine--tRNA ligase.